The following is a 313-amino-acid chain: FAM172 family protein homolog Y75B8A.31 (313 aa).

Residues V293–V313 form a disordered region. The span at E296 to K307 shows a compositional bias: basic and acidic residues.

This sequence belongs to the FAM172 family.

The polypeptide is FAM172 family protein homolog Y75B8A.31 (Caenorhabditis elegans).